We begin with the raw amino-acid sequence, 99 residues long: Plastocyanin (99 aa).

Residues 1 to 99 (IEILLGGDDG…AGMVGKVTVN (99 aa)) enclose the Plastocyanin-like domain. Positions 37, 84, 87, and 92 each coordinate Cu cation.

The protein belongs to the plastocyanin family. The cofactor is Cu(2+).

The protein resides in the plastid. It is found in the chloroplast thylakoid membrane. Its function is as follows. Participates in electron transfer between P700 and the cytochrome b6-f complex in photosystem I. The polypeptide is Plastocyanin (PETE) (Cucumis sativus (Cucumber)).